Here is a 333-residue protein sequence, read N- to C-terminus: Dihydroorotate dehydrogenase (quinone) (333 aa).

FMN contacts are provided by residues 56-60 (AGLDK) and Thr80. A substrate-binding site is contributed by Lys60. Position 105-109 (105-109 (NRMGF)) interacts with substrate. FMN is bound by residues Asn133 and Asn166. Asn166 contacts substrate. Ser169 acts as the Nucleophile in catalysis. Asn171 provides a ligand contact to substrate. 2 residues coordinate FMN: Lys211 and Thr239. 240–241 (NT) lines the substrate pocket. FMN contacts are provided by residues Gly262, Gly291, and 312–313 (YS).

This sequence belongs to the dihydroorotate dehydrogenase family. Type 2 subfamily. Monomer. The cofactor is FMN.

It is found in the cell membrane. The enzyme catalyses (S)-dihydroorotate + a quinone = orotate + a quinol. It functions in the pathway pyrimidine metabolism; UMP biosynthesis via de novo pathway; orotate from (S)-dihydroorotate (quinone route): step 1/1. Its function is as follows. Catalyzes the conversion of dihydroorotate to orotate with quinone as electron acceptor. This is Dihydroorotate dehydrogenase (quinone) from Legionella pneumophila (strain Lens).